The primary structure comprises 302 residues: Probable proteasome inhibitor (302 aa).

An N-acetylalanine modification is found at Ala-2. Disordered stretches follow at residues 151 to 188 and 259 to 302; these read LDGK…QIHP and ARFD…SDFI. Residues 259–269 show a composition bias toward pro residues; the sequence is ARFDPYGPPGV.

Belongs to the proteasome inhibitor PI31 family.

Functionally, could play an important role in control of proteasome function. Inhibits the hydrolysis of protein and peptide substrates by the 20S proteasome. The sequence is that of Probable proteasome inhibitor from Arabidopsis thaliana (Mouse-ear cress).